We begin with the raw amino-acid sequence, 63 residues long: Sec-independent protein translocase protein TatA (63 aa).

A helical membrane pass occupies residues M1–G21. A disordered region spans residues G42–K63. Basic and acidic residues predominate over residues K53 to K63.

This sequence belongs to the TatA/E family. The Tat system comprises two distinct complexes: a TatABC complex, containing multiple copies of TatA, TatB and TatC subunits, and a separate TatA complex, containing only TatA subunits. Substrates initially bind to the TatABC complex, which probably triggers association of the separate TatA complex to form the active translocon.

Its subcellular location is the cell inner membrane. Part of the twin-arginine translocation (Tat) system that transports large folded proteins containing a characteristic twin-arginine motif in their signal peptide across membranes. TatA could form the protein-conducting channel of the Tat system. The polypeptide is Sec-independent protein translocase protein TatA (Rhizobium etli (strain CIAT 652)).